Here is a 176-residue protein sequence, read N- to C-terminus: Membrane glycoprotein UL144 (176 aa).

Positions 1 to 20 (MKPLVMLICFGVILLQLGVT) are cleaved as a signal peptide. One copy of the TNFR-Cys repeat lies at 58-95 (PCPNGTYVSGLYNCTDCTQCNVTQVMIRNCTSTNNTVC). Disulfide bonds link Cys59/Cys71, Cys74/Cys87, and Cys77/Cys95. The chain crosses the membrane as a helical span at residues 134–154 (LAWLSLFIFLVGIILLILYLI).

In terms of assembly, interacts with host TRIM23; this interaction causes auto-ubiquitination of TRAF6, leading to NF-kappaB activation.

It is found in the membrane. Functionally, activates NF-kappa-B in a tumor necrosis factor receptor (TNFR)-associated factor 6 (TRAF6)-dependent manner, causing the up-regulation of the chemokine CCL22. The protein is Membrane glycoprotein UL144 (UL144) of Human cytomegalovirus (strain Merlin) (HHV-5).